The chain runs to 431 residues: Serine/threonine-protein kinase Sgk1 (431 aa).

The interval 1–60 (MTVKTEAAKGTLTYSRMRGMVAILIAFMKQRRMGLNDFIQKIANNSYACKHPEVQSILKI) is necessary for localization to the mitochondria. The tract at residues 66-92 (PELMNANPSPPPSPSQQINLGPSSNPH) is disordered. Phosphoserine is present on S74. Residue S78 is modified to Phosphoserine; by MAPK7. A compositionally biased stretch (polar residues) spans 81–91 (QQINLGPSSNP). A Protein kinase domain is found at 98-355 (FHFLKVIGKG…FMEIKSHVFF (258 aa)). ATP is bound by residues 104–112 (IGKGSFGKV) and K127. The short motif at 131 to 141 (KKAILKKKEEK) is the Nuclear localization signal element. Residue D222 is the Proton acceptor of the active site. T256 bears the Phosphothreonine; by PDPK1 mark. In terms of domain architecture, AGC-kinase C-terminal spans 356–431 (SLINWDDLIN…SYAPPTDSFL (76 aa)). T369 is subject to Phosphothreonine; by PKA. 3 positions are modified to phosphoserine: S397, S401, and S422.

The protein belongs to the protein kinase superfamily. AGC Ser/Thr protein kinase family. In terms of assembly, homodimer; disulfide-linked. Forms a trimeric complex with FBXW7 and NOTCH1. Interacts with MAPK3/ERK1, MAPK1/ERK2, MAP2K1/MEK1, MAP2K2/MEK2, NEDD4, NEDD4L, MAPT/TAU, MAPK7, CREB1, SLC9A3R2/NHERF2 and KCNJ1/ROMK1. Associates with the mammalian target of rapamycin complex 2 (mTORC2) via an interaction with MAPKAP1/SIN1. In terms of processing, regulated by phosphorylation. Activated by phosphorylation on Ser-422 by mTORC2, transforming it into a substrate for PDPK1 which phosphorylates it on Thr-256. Phosphorylation on Ser-397 and Ser-401 are also essential for its activity. Phosphorylation on Ser-78 by MAPK7 is required for growth factor-induced cell cycle progression. Post-translationally, ubiquitinated by NEDD4L; which promotes proteasomal degradation. Ubiquitinated by SYVN1 at the endoplasmic reticulum; which promotes rapid proteasomal degradation and maintains a high turnover rate in resting cells. Isoform 2 shows enhanced stability. In terms of tissue distribution, expressed in most tissues with highest levels in the pancreas, followed by placenta, kidney and lung. Isoform 2 is strongly expressed in brain and pancreas, weaker in heart, placenta, lung, liver and skeletal muscle.

It localises to the cytoplasm. It is found in the nucleus. Its subcellular location is the endoplasmic reticulum membrane. The protein localises to the cell membrane. The protein resides in the mitochondrion. It carries out the reaction L-seryl-[protein] + ATP = O-phospho-L-seryl-[protein] + ADP + H(+). The catalysed reaction is L-threonyl-[protein] + ATP = O-phospho-L-threonyl-[protein] + ADP + H(+). With respect to regulation, two specific sites, one in the kinase domain (Thr-256) and the other in the C-terminal regulatory region (Ser-422), need to be phosphorylated for its full activation. Phosphorylation at Ser-397 and Ser-401 are also essential for its activity. Activated by WNK1, WNK2, WNK3 and WNK4; which promote phosphorylation by mTORC2. In terms of biological role, serine/threonine-protein kinase which is involved in the regulation of a wide variety of ion channels, membrane transporters, cellular enzymes, transcription factors, neuronal excitability, cell growth, proliferation, survival, migration and apoptosis. Plays an important role in cellular stress response. Contributes to regulation of renal Na(+) retention, renal K(+) elimination, salt appetite, gastric acid secretion, intestinal Na(+)/H(+) exchange and nutrient transport, insulin-dependent salt sensitivity of blood pressure, salt sensitivity of peripheral glucose uptake, cardiac repolarization and memory consolidation. Up-regulates Na(+) channels: SCNN1A/ENAC, SCN5A and ASIC1/ACCN2, K(+) channels: KCNJ1/ROMK1, KCNA1-5, KCNQ1-5 and KCNE1, epithelial Ca(2+) channels: TRPV5 and TRPV6, chloride channels: BSND, CLCN2 and CFTR, glutamate transporters: SLC1A3/EAAT1, SLC1A2 /EAAT2, SLC1A1/EAAT3, SLC1A6/EAAT4 and SLC1A7/EAAT5, amino acid transporters: SLC1A5/ASCT2, SLC38A1/SN1 and SLC6A19, creatine transporter: SLC6A8, Na(+)/dicarboxylate cotransporter: SLC13A2/NADC1, Na(+)-dependent phosphate cotransporter: SLC34A2/NAPI-2B, glutamate receptor: GRIK2/GLUR6. Up-regulates carriers: SLC9A3/NHE3, SLC12A1/NKCC2, SLC12A3/NCC, SLC5A3/SMIT, SLC2A1/GLUT1, SLC5A1/SGLT1 and SLC15A2/PEPT2. Regulates enzymes: GSK3A/B, PMM2 and Na(+)/K(+) ATPase, and transcription factors: CTNNB1 and nuclear factor NF-kappa-B. Stimulates sodium transport into epithelial cells by enhancing the stability and expression of SCNN1A/ENAC. This is achieved by phosphorylating the NEDD4L ubiquitin E3 ligase, promoting its interaction with 14-3-3 proteins, thereby preventing it from binding to SCNN1A/ENAC and targeting it for degradation. Regulates store-operated Ca(+2) entry (SOCE) by stimulating ORAI1 and STIM1. Regulates KCNJ1/ROMK1 directly via its phosphorylation or indirectly via increased interaction with SLC9A3R2/NHERF2. Phosphorylates MDM2 and activates MDM2-dependent ubiquitination of p53/TP53. Phosphorylates MAPT/TAU and mediates microtubule depolymerization and neurite formation in hippocampal neurons. Phosphorylates SLC2A4/GLUT4 and up-regulates its activity. Phosphorylates APBB1/FE65 and promotes its localization to the nucleus. Phosphorylates MAPK1/ERK2 and activates it by enhancing its interaction with MAP2K1/MEK1 and MAP2K2/MEK2. Phosphorylates FBXW7 and plays an inhibitory role in the NOTCH1 signaling. Phosphorylates FOXO1 resulting in its relocalization from the nucleus to the cytoplasm. Phosphorylates FOXO3, promoting its exit from the nucleus and interference with FOXO3-dependent transcription. Phosphorylates BRAF and MAP3K3/MEKK3 and inhibits their activity. Phosphorylates SLC9A3/NHE3 in response to dexamethasone, resulting in its activation and increased localization at the cell membrane. Phosphorylates CREB1. Necessary for vascular remodeling during angiogenesis. Sustained high levels and activity may contribute to conditions such as hypertension and diabetic nephropathy. Isoform 2 exhibited a greater effect on cell plasma membrane expression of SCNN1A/ENAC and Na(+) transport than isoform 1. The protein is Serine/threonine-protein kinase Sgk1 (SGK1) of Homo sapiens (Human).